The following is a 284-amino-acid chain: uncharacterized protein (284 aa).

Residues 1-21 (MKTTMLMLVLLVCSYIHYVCA) form the signal peptide. Transmembrane regions (helical) follow at residues 88–108 (AGPFAISQVFGPAGRLYFLWA), 144–164 (ALGVYPYVPTLTGFSTFLGVW), and 212–232 (VFTTFAGPPIATSTVFASPTY).

It localises to the membrane. This is an uncharacterized protein from Schizosaccharomyces pombe (strain 972 / ATCC 24843) (Fission yeast).